The primary structure comprises 647 residues: MYDWWVLQLAKLSVSRKLMVGFGVLLALLLLVVISSNRTLTHQTALSEQLAEVASLMEQTQQAEQGRLAFEAGSDPRQAEQVRQTLAGMLQRLQALRDSELDPAALAHQVEAIEAYRKAFDDLAAADQQRSAARGVLVGTAQQALDSFARLEELMDASLAQQAGDPQALQRSRAVADLHQQLLMVRYQVRGYVFERSDKAEQAAFAAFDALRQAATTLRGQLPGEADAALEQAMGSLQGYRGGIEQFRAGVIRTRQAQQAMQSSTQDMARAGRTLTEAGRQLRESTASRDRASLWLIAALALAFGCVAGWAINRQIVRPLDEALAQAEAIAAGDLGKRPQNPLTLQRRDELGQLQRVMQRMGDSLRELVGRISDGVSQLASSAEELSAVTEQTRAGVNSQKVETDQVATAMHEMAATVQDVARNAELASQAARQADEEARQGDAVVDQAVTRIERLASEMDVSSEAMARLKNESEQIGSVLDVIKSVAEQTNLLALNAAIEAARAGDAGRGFAVVADEVRGLAQRTQQSTAEIEGLIQRLQQGAGEAAERLENSRSLTASTVELARRAGAALDSITRTVSDIQNMNLQIATAAEQQSTVAEEINRSVLSVRDVAEQSAAASEQTAASSGELARLGTQLQAQVGRFRL.

The Cytoplasmic portion of the chain corresponds to 1–16 (MYDWWVLQLAKLSVSR). The chain crosses the membrane as a helical span at residues 17 to 37 (KLMVGFGVLLALLLLVVISSN). Residues 38 to 291 (RTLTHQTALS…LRESTASRDR (254 aa)) lie on the Periplasmic side of the membrane. The HBM domain maps to 45-287 (ALSEQLAEVA…AGRQLRESTA (243 aa)). Residues 292-312 (ASLWLIAALALAFGCVAGWAI) traverse the membrane as a helical segment. The Cytoplasmic segment spans residues 313–647 (NRQIVRPLDE…LQAQVGRFRL (335 aa)). Residues 314-370 (RQIVRPLDEALAQAEAIAAGDLGKRPQNPLTLQRRDELGQLQRVMQRMGDSLRELVG) form the HAMP domain. Positions 375 to 611 (GVSQLASSAE…EINRSVLSVR (237 aa)) constitute a Methyl-accepting transducer domain.

Belongs to the methyl-accepting chemotaxis (MCP) protein family. In terms of assembly, ligand free ligand-binding domain (LBD) is present in a monomer-dimer equilibrium. AlphaKG binding stabilizes the homodimer.

It localises to the cell inner membrane. Functionally, chemotactic-signal transducers respond to changes in the concentration of attractants and repellents in the environment, transduce a signal from the outside to the inside of the cell, and facilitate sensory adaptation through the variation of the level of methylation. McpK is a chemoreceptor that specifically binds and mediates chemotaxis to alpha-ketoglutarate (alphaKG). This is Methyl-accepting chemotaxis protein McpK from Pseudomonas aeruginosa (strain ATCC 15692 / DSM 22644 / CIP 104116 / JCM 14847 / LMG 12228 / 1C / PRS 101 / PAO1).